The following is a 380-amino-acid chain: MTIIRKKHPLIKIINHSFIDLPAPSNISSWWNFGSLLGLCLIIQILTGLFLAMHYTSDTSTAFSSVAHICRDVNYGWLIRYMHANGASMFFICLFLHVGRGIYYGSYNMIETWNMGIILLFAVMATAFMGYVLPWGQMSFWGATVITNLLSAIPYIGTTLVEWIWGGFSVDKATLTRFFAFHFILPFIITALVLVHLLFLHETGSNNPTGLNSDADKIPFHPYYTIKDFLGVLVLLMAFMILVLFFPDILGDPDNYTPANPLNTPPHIKPEWYFLFAYAILRSIPNKLGGVLALILSILILALMPLLHTSKQRALTFRPITQTMYWILVADLLILTWIGGQPVEYPFIMIGQAASIAYFAIIVIFMPIAGMIENNILDLD.

Helical transmembrane passes span 33 to 53, 77 to 98, 113 to 133, and 178 to 198; these read FGSLLGLCLIIQILTGLFLAM, WLIRYMHANGASMFFICLFLHV, WNMGIILLFAVMATAFMGYVL, and FFAFHFILPFIITALVLVHLL. 2 residues coordinate heme b: His83 and His97. His182 and His196 together coordinate heme b. His201 is an a ubiquinone binding site. Transmembrane regions (helical) follow at residues 226–246, 288–308, 320–340, and 347–367; these read IKDFLGVLVLLMAFMILVLFF, LGGVLALILSILILALMPLLH, ITQTMYWILVADLLILTWIGG, and FIMIGQAASIAYFAIIVIFMP.

The protein belongs to the cytochrome b family. The cytochrome bc1 complex contains 11 subunits: 3 respiratory subunits (MT-CYB, CYC1 and UQCRFS1), 2 core proteins (UQCRC1 and UQCRC2) and 6 low-molecular weight proteins (UQCRH/QCR6, UQCRB/QCR7, UQCRQ/QCR8, UQCR10/QCR9, UQCR11/QCR10 and a cleavage product of UQCRFS1). This cytochrome bc1 complex then forms a dimer. Heme b serves as cofactor.

Its subcellular location is the mitochondrion inner membrane. In terms of biological role, component of the ubiquinol-cytochrome c reductase complex (complex III or cytochrome b-c1 complex) that is part of the mitochondrial respiratory chain. The b-c1 complex mediates electron transfer from ubiquinol to cytochrome c. Contributes to the generation of a proton gradient across the mitochondrial membrane that is then used for ATP synthesis. The protein is Cytochrome b (MT-CYB) of Chionomys roberti (Robert's snow vole).